A 330-amino-acid polypeptide reads, in one-letter code: Malate dehydrogenase (330 aa).

G12–G18 is a binding site for NAD(+). Residues R93 and R99 each coordinate substrate. Residues N106, Q113, and V130 to N132 each bind NAD(+). 2 residues coordinate substrate: N132 and R166. The Proton acceptor role is filled by H191.

The protein belongs to the LDH/MDH superfamily. MDH type 2 family.

It carries out the reaction (S)-malate + NAD(+) = oxaloacetate + NADH + H(+). Functionally, catalyzes the reversible oxidation of malate to oxaloacetate. In Azoarcus sp. (strain BH72), this protein is Malate dehydrogenase.